We begin with the raw amino-acid sequence, 28 residues long: Dermaseptin-DI2 (28 aa).

Expressed by the skin glands.

The protein localises to the secreted. Its function is as follows. Has antibacterial activity against the Gram-positive bacteria S.aureus and E.faecalis, and the Gram-negative bacteria P.aeruginosa and E.coli. Has antiprotozoal activity against T.cruzi. Has antifungal activity against the yeasts C.tropicalis (MIC=10.9 uM), C.guilliermondii (MIC=21.8 uM), C.albicans (MIC=21.8 uM) and C.albicans ATCC 1023 (MIC=10.9 uM). Decreases viability of murine peritoneal cells. Fuses to, and disrupts liposomes. The protein is Dermaseptin-DI2 of Phyllomedusa distincta (Monkey frog).